The sequence spans 456 residues: Bifunctional protein GlmU (456 aa).

Residues 1-230 (MDKRFAVVLA…FQETLGVNDR (230 aa)) are pyrophosphorylase. UDP-N-acetyl-alpha-D-glucosamine is bound by residues 9–12 (LAAG), Lys23, Gln73, and 78–79 (GT). Asp103 lines the Mg(2+) pocket. The UDP-N-acetyl-alpha-D-glucosamine site is built by Gly140, Glu155, Asn170, and Asn228. Mg(2+) is bound at residue Asn228. The tract at residues 231 to 251 (VALSQAEQFMKERINKRHMQN) is linker. Positions 252 to 456 (GVTLIDPMNT…DDYVKNIHKK (205 aa)) are N-acetyltransferase. UDP-N-acetyl-alpha-D-glucosamine contacts are provided by Arg333 and Lys351. The active-site Proton acceptor is the His363. UDP-N-acetyl-alpha-D-glucosamine contacts are provided by Tyr366 and Asn377. Residues 386–387 (NY), Ala423, and Arg440 each bind acetyl-CoA.

It in the N-terminal section; belongs to the N-acetylglucosamine-1-phosphate uridyltransferase family. The protein in the C-terminal section; belongs to the transferase hexapeptide repeat family. As to quaternary structure, homotrimer. Requires Mg(2+) as cofactor.

It localises to the cytoplasm. The enzyme catalyses alpha-D-glucosamine 1-phosphate + acetyl-CoA = N-acetyl-alpha-D-glucosamine 1-phosphate + CoA + H(+). It carries out the reaction N-acetyl-alpha-D-glucosamine 1-phosphate + UTP + H(+) = UDP-N-acetyl-alpha-D-glucosamine + diphosphate. It functions in the pathway nucleotide-sugar biosynthesis; UDP-N-acetyl-alpha-D-glucosamine biosynthesis; N-acetyl-alpha-D-glucosamine 1-phosphate from alpha-D-glucosamine 6-phosphate (route II): step 2/2. The protein operates within nucleotide-sugar biosynthesis; UDP-N-acetyl-alpha-D-glucosamine biosynthesis; UDP-N-acetyl-alpha-D-glucosamine from N-acetyl-alpha-D-glucosamine 1-phosphate: step 1/1. It participates in bacterial outer membrane biogenesis; LPS lipid A biosynthesis. Its function is as follows. Catalyzes the last two sequential reactions in the de novo biosynthetic pathway for UDP-N-acetylglucosamine (UDP-GlcNAc). The C-terminal domain catalyzes the transfer of acetyl group from acetyl coenzyme A to glucosamine-1-phosphate (GlcN-1-P) to produce N-acetylglucosamine-1-phosphate (GlcNAc-1-P), which is converted into UDP-GlcNAc by the transfer of uridine 5-monophosphate (from uridine 5-triphosphate), a reaction catalyzed by the N-terminal domain. This is Bifunctional protein GlmU from Bacillus subtilis (strain 168).